A 348-amino-acid polypeptide reads, in one-letter code: 3',5'-cyclic-nucleotide phosphodiesterase (348 aa).

Mn(2+) serves as cofactor.

The catalysed reaction is a nucleoside 3',5'-cyclic phosphate + H2O = a nucleoside 5'-phosphate + H(+). Its function is as follows. Hydrolyzes cAMP to 5'-AMP and cGMP to 5'-GMP. Does not show phosphohydrolase activity toward various phosphatidylcholine and phosphorylated sugars. The chain is 3',5'-cyclic-nucleotide phosphodiesterase from Helicobacter pylori (strain ATCC 700392 / 26695) (Campylobacter pylori).